A 308-amino-acid chain; its full sequence is Methionyl-tRNA formyltransferase (308 aa).

110-113 (SLLP) lines the (6S)-5,6,7,8-tetrahydrofolate pocket.

The protein belongs to the Fmt family.

It carries out the reaction L-methionyl-tRNA(fMet) + (6R)-10-formyltetrahydrofolate = N-formyl-L-methionyl-tRNA(fMet) + (6S)-5,6,7,8-tetrahydrofolate + H(+). Functionally, attaches a formyl group to the free amino group of methionyl-tRNA(fMet). The formyl group appears to play a dual role in the initiator identity of N-formylmethionyl-tRNA by promoting its recognition by IF2 and preventing the misappropriation of this tRNA by the elongation apparatus. This Neisseria meningitidis serogroup A / serotype 4A (strain DSM 15465 / Z2491) protein is Methionyl-tRNA formyltransferase.